The sequence spans 610 residues: MARMSTNSTTPLSHIRNFSIVAHIDHGKSTLADRLIQTTGGLAEREMSEQVLDNMDIERERGITIKAQTVRLHYQANNGEKYILNLIDTPGHVDFAYEVSRSLSACEGSLLVVDASQGVEAQTLANVYQAIDNNHEIVTVLNKIDLPAAEPDRIKEQIEEVIGIDASEAVLISAKTGLGIPDVLEAIVHKLPAPKSPGGDKAPLKALLVDSWYDAYLGVMVLVRVIDGVLTKGQTVRMMGTDAKYQVERVGVLTPKMVNIDRLGPGEIGFITASIKEVADTRVGDTITEDKRPTAQALPGFKPAQPVVFCGLFPVDAADFEDLRAAMGKLRLNDASFSFEMESSAALGFGFRCGFLGLLHLEIIQERLEREFDLDLIATAPSVVYKMFMTDGTERELHNPADMPDVVKISEIHEPWIRATILTPDDYLGGILKLCQDRRGIQIELTYVGTRAMLTYDLPLNEVVFDFYDRLKSISKGYASFDYTLTDHREGNLVKMSILVNGEPVDALSMMVHRTAAEKRGRDMCEKLKELIPKHMFKIPIQAAIGGNVIARETISALRKDVTAKCYGGDATRKRKLLDKQKAGKKRMRQFGKVEIPQEAFIAALKMGDE.

The tr-type G domain occupies 13-195 (SHIRNFSIVA…AIVHKLPAPK (183 aa)). GTP-binding positions include 25 to 30 (DHGKST) and 142 to 145 (NKID).

The protein belongs to the TRAFAC class translation factor GTPase superfamily. Classic translation factor GTPase family. LepA subfamily.

The protein resides in the cell inner membrane. It catalyses the reaction GTP + H2O = GDP + phosphate + H(+). In terms of biological role, required for accurate and efficient protein synthesis under certain stress conditions. May act as a fidelity factor of the translation reaction, by catalyzing a one-codon backward translocation of tRNAs on improperly translocated ribosomes. Back-translocation proceeds from a post-translocation (POST) complex to a pre-translocation (PRE) complex, thus giving elongation factor G a second chance to translocate the tRNAs correctly. Binds to ribosomes in a GTP-dependent manner. The sequence is that of Elongation factor 4 from Rhizobium johnstonii (strain DSM 114642 / LMG 32736 / 3841) (Rhizobium leguminosarum bv. viciae).